The primary structure comprises 96 residues: Small ribosomal subunit protein uS19 (96 aa).

This sequence belongs to the universal ribosomal protein uS19 family.

Its function is as follows. Protein S19 forms a complex with S13 that binds strongly to the 16S ribosomal RNA. This Koribacter versatilis (strain Ellin345) protein is Small ribosomal subunit protein uS19.